The chain runs to 161 residues: 18.3 kDa class I heat shock protein (161 aa).

A sHSP domain is found at 48–161 (ETAAFANARI…KPQVKAINVY (114 aa)).

The protein belongs to the small heat shock protein (HSP20) family. In terms of assembly, forms oligomeric structures.

Its subcellular location is the cytoplasm. The chain is 18.3 kDa class I heat shock protein (HSP18) from Oxybasis rubra (Red goosefoot).